We begin with the raw amino-acid sequence, 149 residues long: UPF0178 protein VC0395_A0405/VC395_0897 (149 aa).

The protein belongs to the UPF0178 family.

This Vibrio cholerae serotype O1 (strain ATCC 39541 / Classical Ogawa 395 / O395) protein is UPF0178 protein VC0395_A0405/VC395_0897.